Reading from the N-terminus, the 117-residue chain is Basic phospholipase A2 pseudexin A chain (117 aa).

7 cysteine pairs are disulfide-bonded: C11-C71, C27-C117, C29-C45, C44-C98, C51-C91, C60-C84, and C78-C89. Y28, G30, and G32 together coordinate Ca(2+). Residue H48 is part of the active site. Ca(2+) is bound at residue D49. D92 is an active-site residue.

Belongs to the phospholipase A2 family. Group I subfamily. D49 sub-subfamily. Requires Ca(2+) as cofactor. As to expression, expressed by the venom gland.

It localises to the secreted. It carries out the reaction a 1,2-diacyl-sn-glycero-3-phosphocholine + H2O = a 1-acyl-sn-glycero-3-phosphocholine + a fatty acid + H(+). Its function is as follows. PLA2 catalyzes the calcium-dependent hydrolysis of the 2-acyl groups in 3-sn-phosphoglycerides. The chain is Basic phospholipase A2 pseudexin A chain from Pseudechis porphyriacus (Red-bellied black snake).